The chain runs to 1022 residues: Leucine--tRNA ligase (1022 aa).

Positions P47–H57 match the 'HIGH' region motif. Positions K697–S701 match the 'KMSKS' region motif. Residue K700 participates in ATP binding.

Belongs to the class-I aminoacyl-tRNA synthetase family.

The protein localises to the cytoplasm. The catalysed reaction is tRNA(Leu) + L-leucine + ATP = L-leucyl-tRNA(Leu) + AMP + diphosphate. The sequence is that of Leucine--tRNA ligase from Ignicoccus hospitalis (strain KIN4/I / DSM 18386 / JCM 14125).